The sequence spans 377 residues: NADH dehydrogenase [ubiquinone] 1 alpha subcomplex subunit 9, mitochondrial (377 aa).

The N-terminal 35 residues, Met-1–Gln-35, are a transit peptide targeting the mitochondrion. Position 175 is an N6-succinyllysine (Lys-175). N6-acetyllysine is present on residues Lys-189 and Lys-370.

Belongs to the complex I NDUFA9 subunit family. As to quaternary structure, complex I is composed of 45 different subunits. This a component of the hydrophobic protein fraction. Interacts with BLOC1S1. Interacts with SLC2A4. Interacts with CLOCK. Interacts with RAB5IF. Requires FAD as cofactor. Post-translationally, acetylated on lysine residues. BLOC1S1 is required for acetylation. Acetylated by CLOCK in a circadian manner.

The protein localises to the mitochondrion matrix. In terms of biological role, accessory subunit of the mitochondrial membrane respiratory chain NADH dehydrogenase (Complex I), that is believed not to be involved in catalysis. Complex I functions in the transfer of electrons from NADH to the respiratory chain. The immediate electron acceptor for the enzyme is believed to be ubiquinone. The protein is NADH dehydrogenase [ubiquinone] 1 alpha subcomplex subunit 9, mitochondrial (NDUFA9) of Pongo abelii (Sumatran orangutan).